The primary structure comprises 106 residues: uncharacterized protein (106 aa).

This is an uncharacterized protein from Schizosaccharomyces pombe (strain 972 / ATCC 24843) (Fission yeast).